The sequence spans 389 residues: MEARILQSSSSCYSSLYAVNRSRFSSVSSPKPFSVSFAQTTRTRTRVLSMSKKDGRTDKDDDTDSLNYKDSGVDIDAGAELVKRIAKMAPGIGGFGGLFPLGDSYLVAGTDGVGTKLKLAFETGIHDTIGIDLVAMSVNDIITSGAKPLFFLDYFATSRLDVDLAEKVIKGIVEGCRQSECALLGGETAEMPDFYAEGEYDLSGFAVGIVKKTSVINGKNIVAGDVLIGLPSSGVHSNGFSLVRRVLARSNLSLKDALPGGSSTLGDALMAPTVIYVKQVLDMIEKGGVKGLAHITGGGFTDNIPRVFPDGLGAVIHTDAWELPPLFKWIQQTGRIEDSEMRRTFNLGIGMVMVVSPEAASRILEEVKNGDYVAYRVGEVVNGEGVSYQ.

Residues 1 to 58 (MEARILQSSSSCYSSLYAVNRSRFSSVSSPKPFSVSFAQTTRTRTRVLSMSKKDGRTD) constitute a chloroplast transit peptide. A disordered region spans residues 46 to 65 (RVLSMSKKDGRTDKDDDTDS).

It belongs to the AIR synthase family.

Its subcellular location is the plastid. The protein localises to the chloroplast. It carries out the reaction 2-formamido-N(1)-(5-O-phospho-beta-D-ribosyl)acetamidine + ATP = 5-amino-1-(5-phospho-beta-D-ribosyl)imidazole + ADP + phosphate + H(+). It functions in the pathway purine metabolism; IMP biosynthesis via de novo pathway; 5-amino-1-(5-phospho-D-ribosyl)imidazole from N(2)-formyl-N(1)-(5-phospho-D-ribosyl)glycinamide: step 2/2. This is Phosphoribosylformylglycinamidine cyclo-ligase, chloroplastic (PUR5) from Arabidopsis thaliana (Mouse-ear cress).